We begin with the raw amino-acid sequence, 238 residues long: Purine nucleoside phosphorylase DeoD-type (238 aa).

His5 lines the a purine D-ribonucleoside pocket. Residues Gly21, Arg25, Arg44, and Arg88–Ser91 each bind phosphate. A purine D-ribonucleoside-binding positions include Glu180 to Glu182 and Ser204 to Asp205. Asp205 functions as the Proton donor in the catalytic mechanism.

This sequence belongs to the PNP/UDP phosphorylase family. Homohexamer; trimer of homodimers.

It carries out the reaction a purine D-ribonucleoside + phosphate = a purine nucleobase + alpha-D-ribose 1-phosphate. The catalysed reaction is a purine 2'-deoxy-D-ribonucleoside + phosphate = a purine nucleobase + 2-deoxy-alpha-D-ribose 1-phosphate. In terms of biological role, catalyzes the reversible phosphorolytic breakdown of the N-glycosidic bond in the beta-(deoxy)ribonucleoside molecules, with the formation of the corresponding free purine bases and pentose-1-phosphate. The chain is Purine nucleoside phosphorylase DeoD-type from Proteus mirabilis (strain HI4320).